We begin with the raw amino-acid sequence, 299 residues long: HTH-type transcriptional regulator CrgA (299 aa).

Residues 1–60 (MKTNSEELTVFVQVVESGSFSRAAEQLAMANSAVSRIVKRLEEKLGVNLLNRTTRQLSLT) form the HTH lysR-type domain. A DNA-binding region (H-T-H motif) is located at residues 20-39 (FSRAAEQLAMANSAVSRIVK).

Belongs to the LysR transcriptional regulatory family. In terms of assembly, forms oligomers. Forms an octomeric ring-like structure in solution. May form hexadecamers when bound to target DNA.

With respect to regulation, activation and repression activities are enhanced by the addition of alpha-methylene-gamma-butyrolactone (MBL), an inducer of NADPH:quinone oxidoreductase. Its function is as follows. Regulatory protein that activates transcription of mdaB, encoding a NADPH:quinone oxidoreductase, and represses its own transcription. Under the same experimental conditions, no regulation of transcription of pilus and capsule genes is detected. This is HTH-type transcriptional regulator CrgA from Neisseria meningitidis serogroup B (strain ATCC BAA-335 / MC58).